The sequence spans 137 residues: Holo-[acyl-carrier-protein] synthase (137 aa).

Mg(2+) is bound by residues Asp8 and Glu57.

The protein belongs to the P-Pant transferase superfamily. AcpS family. Mg(2+) serves as cofactor.

It localises to the cytoplasm. It carries out the reaction apo-[ACP] + CoA = holo-[ACP] + adenosine 3',5'-bisphosphate + H(+). Transfers the 4'-phosphopantetheine moiety from coenzyme A to a Ser of acyl-carrier-protein. The sequence is that of Holo-[acyl-carrier-protein] synthase from Cereibacter sphaeroides (strain ATCC 17023 / DSM 158 / JCM 6121 / CCUG 31486 / LMG 2827 / NBRC 12203 / NCIMB 8253 / ATH 2.4.1.) (Rhodobacter sphaeroides).